Here is a 219-residue protein sequence, read N- to C-terminus: Leucyl/phenylalanyl-tRNA--protein transferase (219 aa).

The protein belongs to the L/F-transferase family.

The protein resides in the cytoplasm. The enzyme catalyses N-terminal L-lysyl-[protein] + L-leucyl-tRNA(Leu) = N-terminal L-leucyl-L-lysyl-[protein] + tRNA(Leu) + H(+). It catalyses the reaction N-terminal L-arginyl-[protein] + L-leucyl-tRNA(Leu) = N-terminal L-leucyl-L-arginyl-[protein] + tRNA(Leu) + H(+). The catalysed reaction is L-phenylalanyl-tRNA(Phe) + an N-terminal L-alpha-aminoacyl-[protein] = an N-terminal L-phenylalanyl-L-alpha-aminoacyl-[protein] + tRNA(Phe). Functionally, functions in the N-end rule pathway of protein degradation where it conjugates Leu, Phe and, less efficiently, Met from aminoacyl-tRNAs to the N-termini of proteins containing an N-terminal arginine or lysine. This is Leucyl/phenylalanyl-tRNA--protein transferase from Leptospira interrogans serogroup Icterohaemorrhagiae serovar copenhageni (strain Fiocruz L1-130).